The following is a 405-amino-acid chain: Octaketide synthase 3 (405 aa).

The span at 1 to 10 shows a compositional bias: polar residues; it reads MGSIAESSPL. A disordered region spans residues 1–22; the sequence is MGSIAESSPLMSRENVEGIRKA. Residue cysteine 176 is part of the active site. CoA-binding positions include serine 283 and 320-323; that span reads GGRA.

It belongs to the thiolase-like superfamily. Chalcone/stilbene synthases family. As to quaternary structure, homodimer.

It functions in the pathway secondary metabolite biosynthesis; flavonoid biosynthesis. Its function is as follows. Catalyzes the iterative condensations of 8 molecules of malonyl-CoA to produce aromatic octaketides, SEK4 and SEK4b, the products of the minimal polyketide synthase for the benzoisochromanequinone actinorhodin. May be involved in the biosynthesis of the octaketide barbaloin. This is Octaketide synthase 3 (PKS5) from Aloe arborescens (Kidachi aloe).